The sequence spans 588 residues: Adenine deaminase (588 aa).

Belongs to the metallo-dependent hydrolases superfamily. Adenine deaminase family. As to quaternary structure, homodimer. It depends on Mn(2+) as a cofactor.

The enzyme catalyses adenine + H2O + H(+) = hypoxanthine + NH4(+). This is Adenine deaminase from Escherichia coli O139:H28 (strain E24377A / ETEC).